The primary structure comprises 360 residues: MLLLLAEYLQQFYKGFAVFQYLTLRGILGVLTALVLSLCYGPWMIRTLQNRQIGQSVRNDGPQSHLSKSGTPTMGGALILSSIGVSTLLWADLSNRYVWVVLLVTLLFGAIGWVDDYRKVIEKNSRGLPSRWKYFWQSVFGLGAAIFLYMTASTPVETTLILPMLKDYSIPLGAGFIVLTYFVIVGSSNAVNLTDGLDGLAIMPTVMVGGGLGIFCYLSGNVKFAEYLLIPYVPGAGELIVFCGALIGAGLGFLWFNTYPAQVFMGDVGALALGAALGTIAVIVRQEIVLFIMGGVFVMETLSVVIQVASFKLTGRRVFRMAPIHHHFELKGWPEPRVIVRFWIITVILVLIGLATLKLR.

The next 10 membrane-spanning stretches (helical) occupy residues 16 to 36, 73 to 93, 97 to 117, 134 to 154, 168 to 188, 199 to 219, 236 to 256, 263 to 283, 288 to 308, and 338 to 358; these read FAVF…ALVL, TMGG…WADL, YVWV…VDDY, YFWQ…TAST, YSIP…VGSS, GLAI…CYLS, AGEL…FLWF, VFMG…IAVI, IVLF…VIQV, and VIVR…ATLK.

The protein belongs to the glycosyltransferase 4 family. MraY subfamily. Requires Mg(2+) as cofactor.

The protein resides in the cell inner membrane. It catalyses the reaction UDP-N-acetyl-alpha-D-muramoyl-L-alanyl-gamma-D-glutamyl-meso-2,6-diaminopimeloyl-D-alanyl-D-alanine + di-trans,octa-cis-undecaprenyl phosphate = di-trans,octa-cis-undecaprenyl diphospho-N-acetyl-alpha-D-muramoyl-L-alanyl-D-glutamyl-meso-2,6-diaminopimeloyl-D-alanyl-D-alanine + UMP. The protein operates within cell wall biogenesis; peptidoglycan biosynthesis. Its function is as follows. Catalyzes the initial step of the lipid cycle reactions in the biosynthesis of the cell wall peptidoglycan: transfers peptidoglycan precursor phospho-MurNAc-pentapeptide from UDP-MurNAc-pentapeptide onto the lipid carrier undecaprenyl phosphate, yielding undecaprenyl-pyrophosphoryl-MurNAc-pentapeptide, known as lipid I. In Pseudomonas fluorescens (strain Pf0-1), this protein is Phospho-N-acetylmuramoyl-pentapeptide-transferase.